The primary structure comprises 3103 residues: Extracellular matrix protein 3 (3103 aa).

An N-terminal signal peptide occupies residues 1–19 (MASALLCFLAAILPGMIAA). Residues 20 to 3047 (QNTWVLGTSD…TYELAPKGTN (3028 aa)) lie on the Extracellular side of the membrane. CSPG repeat units follow at residues 289–388 (PPSL…LEIV), 411–499 (APVV…FRMT), 520–630 (APIV…FRVV), 656–762 (PPEM…FVVQ), 784–875 (QPPT…LEIT), 901–993 (LPPG…LTLS), 1022–1124 (APNV…FRCT), 1145–1238 (EEPQ…VLLT), 1259–1357 (TPRL…FDIT), 1378–1470 (VHPS…FQVT), 1490–1579 (KEPV…FIVT), and 1613–1710 (APQI…VEVR). Residues Asn330 and Asn453 are each glycosylated (N-linked (GlcNAc...) asparagine). 7 N-linked (GlcNAc...) asparagine glycosylation sites follow: Asn989, Asn1024, Asn1042, Asn1207, Asn1294, Asn1321, and Asn1327. Asn1542, Asn1674, Asn1679, Asn1725, and Asn1739 each carry an N-linked (GlcNAc...) asparagine glycan. Calx-beta domains lie at 1717–1816 (LPNQ…IILH), 1829–1942 (AVVT…VKLS), 1956–2062 (NVII…LVLN), and 2077–2179 (ITIN…LVLG). N-linked (GlcNAc...) asparagine glycosylation is found at Asn2080, Asn2195, Asn2274, Asn2385, and Asn2932. Residues 2197 to 2302 (TVVTVHDVGD…MREAFTLHIT (106 aa)) enclose the Calx-beta 5 domain. Positions 2983–3013 (SSGIGKRETEHHAISSRQRRQANSEALVDPA) are disordered. A helical membrane pass occupies residues 3048-3068 (VVMIAVVIGVILIILLVALVI). Residues 3069–3103 (GVVVRRRQAKQQPVVVVNGSAKVVSNVHFDDNTEV) lie on the Cytoplasmic side of the membrane.

This sequence belongs to the FRAS1 family. As to expression, component of extracellular matrix fibers that interact with PMC filopodia during gastrulation (at protein level).

It localises to the cell membrane. Functionally, extracellular matrix protein that may serve as substrate for the migratory primary mesenchyme cells (PMCs), the interaction possibly providing guidance information to migrating PMCs. This Lytechinus variegatus (Green sea urchin) protein is Extracellular matrix protein 3 (ECM3).